The chain runs to 237 residues: Phosphoribosylaminoimidazole-succinocarboxamide synthase (237 aa).

It belongs to the SAICAR synthetase family.

The enzyme catalyses 5-amino-1-(5-phospho-D-ribosyl)imidazole-4-carboxylate + L-aspartate + ATP = (2S)-2-[5-amino-1-(5-phospho-beta-D-ribosyl)imidazole-4-carboxamido]succinate + ADP + phosphate + 2 H(+). It functions in the pathway purine metabolism; IMP biosynthesis via de novo pathway; 5-amino-1-(5-phospho-D-ribosyl)imidazole-4-carboxamide from 5-amino-1-(5-phospho-D-ribosyl)imidazole-4-carboxylate: step 1/2. This chain is Phosphoribosylaminoimidazole-succinocarboxamide synthase, found in Pseudomonas fluorescens (strain ATCC BAA-477 / NRRL B-23932 / Pf-5).